Here is a 348-residue protein sequence, read N- to C-terminus: 2-methyl-6-phytyl-1,4-hydroquinone methyltransferase 2, chloroplastic (348 aa).

Residues 1 to 48 (MAMASSAYAPAGGVGTHSAPGRIRPPRGLGFSTTTTKSRPLVLTRRGG) form a disordered region. A chloroplast-targeting transit peptide spans 1-59 (MAMASSAYAPAGGVGTHSAPGRIRPPRGLGFSTTTTKSRPLVLTRRGGGGGNISVARLR). Topologically, residues 60-317 (CAASSSSAAA…PVNPITFLFR (258 aa)) are chloroplast intermembrane. The SAM motif I stretch occupies residues 125–134 (VVDVGGGTGF). Residues 170–183 (VTIMEGDAEDLPFP) form an SAM motif II region. The segment at 211-224 (RVLRLGGVACMIGP) is SAM motif III. The helical transmembrane segment at 318 to 338 (FLMGTICAAYYVLVPIYMWIK) threads the bilayer. Residues 339-348 (DQIVPKGMPI) lie on the Stromal side of the membrane.

It belongs to the class I-like SAM-binding methyltransferase superfamily. MPBQ/MBSQ MT family.

It localises to the plastid. The protein localises to the chloroplast inner membrane. It catalyses the reaction 2-methyl-6-phytyl-1,4-benzene-1,4-diol + S-adenosyl-L-methionine = 2,3-dimethyl-6-phytylbenzene-1,4-diol + S-adenosyl-L-homocysteine + H(+). It carries out the reaction 2-methyl-6-(all-trans-nonaprenyl)benzene-1,4-diol + S-adenosyl-L-methionine = plastoquinol-9 + S-adenosyl-L-homocysteine + H(+). The enzyme catalyses 6-geranylgeranyl-2-methylbenzene-1,4-diol + S-adenosyl-L-methionine = 6-geranylgeranyl-2,3-dimethylbenzene-1,4-diol + S-adenosyl-L-homocysteine + H(+). It functions in the pathway cofactor biosynthesis; tocopherol biosynthesis. Its function is as follows. Involved in a key methylation step in both tocopherols (vitamin E) and plastoquinone synthesis. Catalyzes the conversion of 2-methyl-6-phytyl-1,4-hydroquinone (MPBQ) to 2,3-dimethyl-6-phytyl-1,4-hydroquinone (DMPQ, a substrate for tocopherol cyclase), and 2-methyl-6-solanyl-1,4-benzoquinone (MSBQ) to plastoquinone. The sequence is that of 2-methyl-6-phytyl-1,4-hydroquinone methyltransferase 2, chloroplastic from Oryza sativa subsp. japonica (Rice).